Here is a 234-residue protein sequence, read N- to C-terminus: Sugar fermentation stimulation protein homolog (234 aa).

The protein belongs to the SfsA family.

In Edwardsiella ictaluri (strain 93-146), this protein is Sugar fermentation stimulation protein homolog.